We begin with the raw amino-acid sequence, 412 residues long: MNIYLVGGAVRDSLLNLPVTEQDWVVVGATPEQLLKLGYQQVGKDFPVFLHPVSHEEYALARTERKSGQGYTGFTCYAAPDVTLEDDLLRRDLTVNAIARSADGEFIDPYHGKQDLENRVLRHVSDAFGEDPLRVLRVARFAARFAYLGFTIAPETMSLMSNMAQSGELSALTPERVWKETEKALKTQSPHVYFQVLRDCGALAVLFPEIERLFGVPAPEKWHPEIDTGIHTLMTLAIAAQLSPEVDIRFAALCHDLGKGLTPKEHWPHHHGHGPAGVKLVEQLCQRLRIPNPVRDLAKLVAEYHDLIHTVNKLRPETLLKLFNAIDVWRKPERLEQMIMTSEADARGRTGFENNPYPQGDYLRAAFQIANGVSIQEVVASGLQGLAIRDELQRRRQQALAEWKQTQETPLI.

ATP contacts are provided by Gly8 and Arg11. CTP is bound by residues Gly8 and Arg11. 2 residues coordinate Mg(2+): Glu21 and Asp23. The ATP site is built by Arg91, Arg137, and Arg140. Positions 91, 137, and 140 each coordinate CTP. The region spanning 228 to 329 (TGIHTLMTLA…LKLFNAIDVW (102 aa)) is the HD domain.

It belongs to the tRNA nucleotidyltransferase/poly(A) polymerase family. Bacterial CCA-adding enzyme type 1 subfamily. As to quaternary structure, monomer. Can also form homodimers and oligomers. It depends on Mg(2+) as a cofactor. Ni(2+) is required as a cofactor.

The enzyme catalyses a tRNA precursor + 2 CTP + ATP = a tRNA with a 3' CCA end + 3 diphosphate. The catalysed reaction is a tRNA with a 3' CCA end + 2 CTP + ATP = a tRNA with a 3' CCACCA end + 3 diphosphate. Catalyzes the addition and repair of the essential 3'-terminal CCA sequence in tRNAs without using a nucleic acid template. Adds these three nucleotides in the order of C, C, and A to the tRNA nucleotide-73, using CTP and ATP as substrates and producing inorganic pyrophosphate. tRNA 3'-terminal CCA addition is required both for tRNA processing and repair. Also involved in tRNA surveillance by mediating tandem CCA addition to generate a CCACCA at the 3' terminus of unstable tRNAs. While stable tRNAs receive only 3'-terminal CCA, unstable tRNAs are marked with CCACCA and rapidly degraded. This is Multifunctional CCA protein from Yersinia pseudotuberculosis serotype I (strain IP32953).